Consider the following 1070-residue polypeptide: Ubiquitin-protein ligase E3B (1070 aa).

Methionine 1 is modified (N-acetylmethionine). The IQ domain occupies 29-58 (RERSAVTIQALVRSFLCRRRLHRDIRKEID). Serine 421 carries the phosphoserine modification. The region spanning 704–1070 (SQHAMKGVIR…ISMNTGFELS (367 aa)) is the HECT domain. Catalysis depends on cysteine 1038, which acts as the Glycyl thioester intermediate.

In terms of tissue distribution, widely expressed. High expression is observed in developing central nervous system.

The protein resides in the postsynaptic density. It carries out the reaction S-ubiquitinyl-[E2 ubiquitin-conjugating enzyme]-L-cysteine + [acceptor protein]-L-lysine = [E2 ubiquitin-conjugating enzyme]-L-cysteine + N(6)-ubiquitinyl-[acceptor protein]-L-lysine.. It functions in the pathway protein modification; protein ubiquitination. Its function is as follows. E3 ubiquitin-protein ligase which accepts ubiquitin from an E2 ubiquitin-conjugating enzyme in the form of a thioester and then directly transfers the ubiquitin to targeted substrates. Ubiquitinates BCKDK and targets it for degradation, thereby regulating various metabolic processes. Involved in the positive regulation of neurite branching in hippocampal neurons and the control of neuronal spine number and morphology, through the ubiquitination of PPP3CC. The sequence is that of Ubiquitin-protein ligase E3B (Ube3b) from Mus musculus (Mouse).